A 226-amino-acid polypeptide reads, in one-letter code: Orotidine 5'-phosphate decarboxylase (226 aa).

Substrate is bound by residues aspartate 8, lysine 30, 58–67 (DLKIHDIPNT), threonine 117, arginine 177, glutamine 186, glycine 206, and arginine 207. The active-site Proton donor is the lysine 60.

Belongs to the OMP decarboxylase family. Type 1 subfamily. As to quaternary structure, homodimer.

The catalysed reaction is orotidine 5'-phosphate + H(+) = UMP + CO2. It participates in pyrimidine metabolism; UMP biosynthesis via de novo pathway; UMP from orotate: step 2/2. Its function is as follows. Catalyzes the decarboxylation of orotidine 5'-monophosphate (OMP) to uridine 5'-monophosphate (UMP). The chain is Orotidine 5'-phosphate decarboxylase from Campylobacter jejuni subsp. jejuni serotype O:6 (strain 81116 / NCTC 11828).